The following is a 1192-amino-acid chain: Plakophilin-4 (1192 aa).

Residues 1–31 are disordered; the sequence is MPAPEQASLVEEGQPQTRQEAASTGPGMEPE. The stretch at 36-70 forms a coiled coil; it reads TILASVKEQELQFQRLTRELEVERQIVASQLERCR. A disordered region spans residues 73 to 262; the sequence is AESPSIASTS…PRPLNPSAYS (190 aa). Ser75 carries the post-translational modification Phosphoserine. Over residues 77–86 the composition is skewed to polar residues; the sequence is SIASTSSTEK. Thr84 carries the phosphothreonine modification. Phosphoserine occurs at positions 106, 132, 136, and 139. 3 stretches are compositionally biased toward polar residues: residues 138–156, 163–204, and 214–230; these read GSLG…SDSG, FHNS…QPSV, and SVPS…STGV. Phosphoserine occurs at positions 221, 231, and 236. Residues 231 to 242 are compositionally biased toward low complexity; sequence SPSRGSLRTSLG. An omega-N-methylarginine mark is found at Arg254 and Arg270. Residues Ser273 and Ser281 each carry the phosphoserine modification. The tract at residues 290–310 is disordered; that stretch reads SVTSRQTSNPNGPTPQYQTTA. Phosphoserine occurs at positions 314, 327, and 337. Residues 323-348 are disordered; sequence TRVASPSQGQVGSSSPKRSGMTAVPQ. Residues 325–338 are compositionally biased toward low complexity; it reads VASPSQGQVGSSSP. Tyr372 carries the post-translational modification Phosphotyrosine. Phosphoserine occurs at positions 392, 403, and 406. Phosphothreonine is present on Thr412. Tyr415 bears the Phosphotyrosine mark. Residues 415-455 form an ARM 1 repeat; it reads YEGRTYYSPVYRSPNHGTVELQGSQTALYRTGSVGIGNLQR. Residues Ser422, Ser427, and Ser438 each carry the phosphoserine modification. Tyr478 is subject to Phosphotyrosine. Phosphoserine occurs at positions 510, 512, and 515. ARM repeat units follow at residues 518 to 557, 560 to 599, 604 to 644, 660 to 702, and 706 to 751; these read KDPR…HLCF, NKVK…NLVF, DENK…NLSS, LTNT…NLSS, and EARK…NLSY. The segment covering 773 to 782 has biased composition (basic and acidic residues); it reads GKESPSKDSE. Residues 773 to 810 form a disordered region; sequence GKESPSKDSEPSCWGKKKKKKKRTPQEDQWDGVGPIPG. The residue at position 776 (Ser776) is a Phosphoserine. ARM repeat units follow at residues 815 to 855, 862 to 901, and 950 to 993; these read PKGV…NLSA, AYIR…NMAL, and MENA…TLWQ. Phosphothreonine is present on residues Thr1013 and Thr1017. Ser1045 is modified (phosphoserine). A disordered region spans residues 1058 to 1086; it reads PRSEYDRTQPPMQYYNSQGDATHKGLYPG. A compositionally biased stretch (polar residues) spans 1067-1077; sequence PPMQYYNSQGD. 3 positions are modified to phosphoserine: Ser1091, Ser1100, and Ser1135.

The protein belongs to the beta-catenin family. Interacts with PDZD2. Interacts (via the C-terminus) with FRMPD2 (via the PDZ 2 domain). Interacts with RHOA; the interaction is detected at the midbody. Interacts with ECT2; the interaction is detected at the midbody. Interacts with CCDC85B. In terms of tissue distribution, expressed in salivary glands (at protein level). Expressed in arrector pili muscle (at protein level).

It localises to the cell junction. Its subcellular location is the desmosome. It is found in the cytoplasm. The protein resides in the cytoskeleton. The protein localises to the spindle. It localises to the midbody. Its subcellular location is the cell membrane. Functionally, plays a role as a regulator of Rho activity during cytokinesis. May play a role in junctional plaques. This Homo sapiens (Human) protein is Plakophilin-4 (PKP4).